Reading from the N-terminus, the 244-residue chain is 3-deoxy-manno-octulosonate cytidylyltransferase (244 aa).

It belongs to the KdsB family.

Its subcellular location is the cytoplasm. The catalysed reaction is 3-deoxy-alpha-D-manno-oct-2-ulosonate + CTP = CMP-3-deoxy-beta-D-manno-octulosonate + diphosphate. It participates in nucleotide-sugar biosynthesis; CMP-3-deoxy-D-manno-octulosonate biosynthesis; CMP-3-deoxy-D-manno-octulosonate from 3-deoxy-D-manno-octulosonate and CTP: step 1/1. It functions in the pathway bacterial outer membrane biogenesis; lipopolysaccharide biosynthesis. Its function is as follows. Activates KDO (a required 8-carbon sugar) for incorporation into bacterial lipopolysaccharide in Gram-negative bacteria. This chain is 3-deoxy-manno-octulosonate cytidylyltransferase, found in Rickettsia canadensis (strain McKiel).